Reading from the N-terminus, the 475-residue chain is uncharacterized protein (475 aa).

The chain crosses the membrane as a helical span at residues 19-39; it reads IKVGVFFVAILLILTGILLTI. 2 disordered regions span residues 55 to 79 and 330 to 350; these read GEYHELNTSPNENSTALQPDENATS and SSPFNPNRRHPVTGRIRPHKG. The span at 60 to 79 shows a compositional bias: polar residues; that stretch reads LNTSPNENSTALQPDENATS. Residues 336 to 348 show a composition bias toward basic residues; that stretch reads NRRHPVTGRIRPH. His348 is a Zn(2+) binding site.

In the central section; belongs to the OapA family. This sequence in the C-terminal section; belongs to the peptidase M23B family. Zn(2+) serves as cofactor.

The protein localises to the cell membrane. This is an uncharacterized protein from Haemophilus influenzae (strain ATCC 51907 / DSM 11121 / KW20 / Rd).